We begin with the raw amino-acid sequence, 58 residues long: Potassium channel toxin Ts16 (58 aa).

The N-terminal stretch at 1–16 (MHSSVFILILFSLAVI) is a signal peptide. Intrachain disulfides connect C29/C51, C34/C47, and C38/C53.

Expressed by the venom gland.

It is found in the secreted. Its function is as follows. Blocks potassium channels. The sequence is that of Potassium channel toxin Ts16 from Tityus serrulatus (Brazilian scorpion).